Reading from the N-terminus, the 226-residue chain is Endonuclease NucS (226 aa).

Belongs to the NucS endonuclease family.

The protein resides in the cytoplasm. Its function is as follows. Cleaves both 3' and 5' ssDNA extremities of branched DNA structures. This Mycobacterium tuberculosis (strain CDC 1551 / Oshkosh) protein is Endonuclease NucS.